The primary structure comprises 189 residues: Peptidyl-tRNA hydrolase (189 aa).

Position 15 (tyrosine 15) interacts with tRNA. Histidine 20 functions as the Proton acceptor in the catalytic mechanism. TRNA is bound by residues phenylalanine 64 and asparagine 66.

Belongs to the PTH family. In terms of assembly, monomer.

The protein localises to the cytoplasm. The catalysed reaction is an N-acyl-L-alpha-aminoacyl-tRNA + H2O = an N-acyl-L-amino acid + a tRNA + H(+). In terms of biological role, hydrolyzes ribosome-free peptidyl-tRNAs (with 1 or more amino acids incorporated), which drop off the ribosome during protein synthesis, or as a result of ribosome stalling. Catalyzes the release of premature peptidyl moieties from peptidyl-tRNA molecules trapped in stalled 50S ribosomal subunits, and thus maintains levels of free tRNAs and 50S ribosomes. The polypeptide is Peptidyl-tRNA hydrolase (Persephonella marina (strain DSM 14350 / EX-H1)).